Here is a 46-residue protein sequence, read N- to C-terminus: Esculentin-1A (46 aa).

Cysteine 40 and cysteine 46 form a disulfide bridge.

This sequence belongs to the frog skin active peptide (FSAP) family. Brevinin subfamily. Expressed by the skin glands.

It localises to the secreted. Shows antibacterial activity against representative Gram-negative and Gram-positive bacterial species, and hemolytic activity. This chain is Esculentin-1A, found in Pelophylax lessonae (Pool frog).